The following is a 233-amino-acid chain: Large ribosomal subunit protein uL1 (233 aa).

Belongs to the universal ribosomal protein uL1 family. In terms of assembly, part of the 50S ribosomal subunit.

In terms of biological role, binds directly to 23S rRNA. The L1 stalk is quite mobile in the ribosome, and is involved in E site tRNA release. Functionally, protein L1 is also a translational repressor protein, it controls the translation of the L11 operon by binding to its mRNA. In Hamiltonella defensa subsp. Acyrthosiphon pisum (strain 5AT), this protein is Large ribosomal subunit protein uL1.